Here is a 123-residue protein sequence, read N- to C-terminus: Transmembrane protein 254 (123 aa).

3 helical membrane-spanning segments follow: residues 15–35 (LFWF…VFWP), 63–83 (NGYW…LVLC), and 95–115 (LLWF…LIAY).

The protein localises to the membrane. The protein is Transmembrane protein 254 of Mus musculus (Mouse).